Consider the following 228-residue polypeptide: uncharacterized protein (228 aa).

The signal sequence occupies residues 1–16 (MILLLLALISATTAFQ). Residues 206-225 (LFQTLFFVTLSFLVGSAFAL) traverse the membrane as a helical segment.

The protein to A.fulgidus AF_1225.

The protein resides in the membrane. This is an uncharacterized protein from Archaeoglobus fulgidus (strain ATCC 49558 / DSM 4304 / JCM 9628 / NBRC 100126 / VC-16).